The primary structure comprises 513 residues: L-aspartate oxidase (513 aa).

FAD contacts are provided by residues 17 to 20 (AGIA) and 46 to 53 (SSILAQGG). Residue R278 is the Proton donor/acceptor of the active site. Residues E361 and 377–378 (SL) each bind FAD.

It belongs to the FAD-dependent oxidoreductase 2 family. NadB subfamily. FAD serves as cofactor.

Its subcellular location is the cytoplasm. The enzyme catalyses L-aspartate + O2 = iminosuccinate + H2O2. The protein operates within cofactor biosynthesis; NAD(+) biosynthesis; iminoaspartate from L-aspartate (oxidase route): step 1/1. Functionally, catalyzes the oxidation of L-aspartate to iminoaspartate, the first step in the de novo biosynthesis of NAD(+). This chain is L-aspartate oxidase (nadB), found in Mesorhizobium japonicum (strain LMG 29417 / CECT 9101 / MAFF 303099) (Mesorhizobium loti (strain MAFF 303099)).